The chain runs to 37 residues: Large ribosomal subunit protein bL36A (37 aa).

Belongs to the bacterial ribosomal protein bL36 family.

This chain is Large ribosomal subunit protein bL36A, found in Haemophilus ducreyi (strain 35000HP / ATCC 700724).